A 288-amino-acid chain; its full sequence is MITYVFPGQGSQKQGMGSGLFDEFKELTDQADEILGYSIKRLCLENPYSNLNKTQFTQPALYVVNALSYLKKIRDEEVKPDFVAGHSLGEYNALFAAEAFDFETGLQLVRKRGELMSLISNGGMAAVMGLNEEQVAKALKEYHLHDVDIANVNAPYQIVISGKKDEIEKAASLFETMTEVTMVLPLNVSGAFHSRYMNKAKEEFEEFLHAFYFSPPSIPVISNVYAKPYTYEFMKQTLADQINHSVKWTDSISYLMKKGHMEFEEVGPGNVLTGLIHRIKKDAEAMPR.

Active-site residues include serine 87 and histidine 193.

The protein belongs to the FabD family.

It is found in the cytoplasm. The catalysed reaction is holo-[ACP] + malonyl-CoA = malonyl-[ACP] + CoA. The protein operates within antibiotic biosynthesis; bacillaene biosynthesis. In terms of biological role, involved in some intermediate steps for the synthesis of the antibiotic polyketide bacillaene which is involved in secondary metabolism. It catalyzes the transfer of the malonyl-CoA group to the acyl-carrier-protein AcpK (Mal-AcpK). This is Polyketide biosynthesis malonyl CoA-acyl carrier protein transacylase PksC (pksC) from Bacillus subtilis (strain 168).